A 143-amino-acid chain; its full sequence is Transcription antitermination protein NusB (143 aa).

Belongs to the NusB family.

Involved in transcription antitermination. Required for transcription of ribosomal RNA (rRNA) genes. Binds specifically to the boxA antiterminator sequence of the ribosomal RNA (rrn) operons. The polypeptide is Transcription antitermination protein NusB (Methylacidiphilum infernorum (isolate V4) (Methylokorus infernorum (strain V4))).